Reading from the N-terminus, the 181-residue chain is Inner membrane-spanning protein YciB (181 aa).

5 helical membrane passes run 10 to 30, 50 to 70, 72 to 92, 118 to 138, and 148 to 168; these read LIIF…GALI, MHLI…VFHD, AFIK…LGVS, VTWY…YVAF, and FKVF…VFYL.

This sequence belongs to the YciB family.

It localises to the cell inner membrane. Functionally, plays a role in cell envelope biogenesis, maintenance of cell envelope integrity and membrane homeostasis. The sequence is that of Inner membrane-spanning protein YciB from Shewanella sp. (strain ANA-3).